The primary structure comprises 345 residues: Membrane progestin receptor gamma-A (345 aa).

Residues 1-52 (MLNLIKLPQVFTINQVPKVFHEDGIISGYRHPCSSAKDCVLSLFQLTNETLN) are Cytoplasmic-facing. Residues 53–73 (IWTHFLPTWFFLWKLLTVVLV) traverse the membrane as a helical segment. The Extracellular segment spans residues 74 to 80 (LEDWRDP). Residues 81–101 (FIWPFLVFLLSCCVYPLASSC) traverse the membrane as a helical segment. At 102–114 (AHTFSTMSERARH) the chain is on the cytoplasmic side. The chain crosses the membrane as a helical span at residues 115-135 (ICFFFDYGALSFYSLGSAIIY). Residues 136 to 148 (SSYSFPDKWVNGT) lie on the Extracellular side of the membrane. Residues 149–169 (FHLNYVSIAVVNSIISTALAC) traverse the membrane as a helical segment. Residues 170–201 (YSRLGLPFLEYNCHSIKRPSGKLDQKLCKCLR) are Cytoplasmic-facing. Residues 202–222 (IIAFVYPYLFDNIPLFYRIFV) traverse the membrane as a helical segment. Residues 223–272 (CAGEGCTVNEANTVHYQHTSLAFFTGFLFATHLPERLAPGSFDYIGHSHQ) are Extracellular-facing. Residues 273 to 293 (LFHVFAIIGTYFQMTAIELDM) traverse the membrane as a helical segment. At 294-314 (AARKQWLHAHLPPVTFLNTVG) the chain is on the cytoplasmic side. A helical transmembrane segment spans residues 315 to 335 (AAFFSVVSGLCIVYVFSLSLF). Residues 336 to 345 (STRGVKNKSF) are Extracellular-facing.

It belongs to the ADIPOR family.

It is found in the membrane. Its function is as follows. Steroid membrane receptor. Binds progesterone. May be involved in oocyte maturation. In Danio rerio (Zebrafish), this protein is Membrane progestin receptor gamma-A (paqr5a).